The primary structure comprises 307 residues: Protein Y (307 aa).

It belongs to the ATP-dependent AMP-binding enzyme family.

It functions in the pathway antibiotic biosynthesis; candicidin biosynthesis. In terms of biological role, may be a p-aminobenzoic acid-CoA ligase that activates PabA to start the biosynthesis of candicidin. The protein is Protein Y of Streptomyces griseus.